We begin with the raw amino-acid sequence, 99 residues long: Nucleoid-associated protein EbfC (99 aa).

This sequence belongs to the YbaB/EbfC family. As to quaternary structure, homodimer.

The protein localises to the cytoplasm. The protein resides in the nucleoid. In terms of biological role, binds to DNA and alters its conformation. May be involved in regulation of gene expression, nucleoid organization and DNA protection. In Borrelia hermsii (strain HS1 / DAH), this protein is Nucleoid-associated protein EbfC.